The chain runs to 523 residues: Monocarboxylate transporter 7 (523 aa).

At 1–21 the chain is on the cytoplasmic side; that stretch reads MTQNKLKLCSKANVYTEVPDG. The helical transmembrane segment at 22 to 42 threads the bilayer; the sequence is GWGWAVAVSFFFVEVFTYGII. Residues 43-62 are Extracellular-facing; it reads KTFGVFFNDLMDSFNESNSR. A helical transmembrane segment spans residues 63–83; sequence ISWIISICVFVLTFSAPLATV. At 84 to 91 the chain is on the cytoplasmic side; that stretch reads LSNRFGHR. The chain crosses the membrane as a helical span at residues 92–112; that stretch reads LVVMLGGLLVSTGMVAASFSQ. At 113–118 the chain is on the extracellular side; it reads EVSHMY. Residues 119 to 139 traverse the membrane as a helical segment; the sequence is VAIGIISGLGYCFSFLPTVTI. The Cytoplasmic portion of the chain corresponds to 140 to 149; sequence LSQYFGKRRS. A helical membrane pass occupies residues 150–170; sequence IVTAVASTGECFAVFAFAPAI. Over 171–184 the chain is Extracellular; the sequence is MALKERIGWRYSLL. A helical transmembrane segment spans residues 185-205; sequence FVGLLQLNIVIFGALLRPIFI. Residues 206 to 299 lie on the Cytoplasmic side of the membrane; it reads RGPASPKIVI…KEKSFICYAL (94 aa). Phosphoserine is present on residues serine 234, serine 237, serine 240, and serine 247. The helical transmembrane segment at 300–320 threads the bilayer; that stretch reads FGLFATLGFFAPSLYIIPLGI. The Extracellular portion of the chain corresponds to 321–330; it reads SLGIDQDRAA. The helical transmembrane segment at 331–351 threads the bilayer; that stretch reads FLLSTMAIAEVFGRIGAGFVL. The Cytoplasmic segment spans residues 352–358; the sequence is NREPIRK. The helical transmembrane segment at 359–379 threads the bilayer; sequence IYIELICVILLTVSLFAFTFA. The Extracellular segment spans residues 380 to 381; sequence TE. The helical transmembrane segment at 382–402 threads the bilayer; it reads FWGLMSCSIFFGFMVGTIGGT. Over 403–423 the chain is Cytoplasmic; the sequence is HIPLLAEDDVVGIEKMSSAAG. A helical membrane pass occupies residues 424 to 444; sequence VYIFIQSIAGLAGPPLAGLLV. Over 445-452 the chain is Extracellular; that stretch reads DQSKIYSR. The helical transmembrane segment at 453-473 threads the bilayer; that stretch reads AFYSCAAGMALAAVCLALVRP. At 474-523 the chain is on the cytoplasmic side; that stretch reads CKMGLCQHHHSGETKVVSHRGKTLQDIPEDFLEMDLAKNEHRVHVQMEPV.

It belongs to the major facilitator superfamily. Monocarboxylate porter (TC 2.A.1.13) family. Forms functional complexes with BSG/CD147 or EMB/GP70 ancillary proteins.

It localises to the basolateral cell membrane. The enzyme catalyses taurine(out) = taurine(in). Its function is as follows. Monocarboxylate transporter selective for taurine. May associate with BSG/CD147 or EMB/GP70 ancillary proteins to mediate facilitative efflux or influx of taurine across the plasma membrane. The transport is pH- and sodium-independent. Rather low-affinity, is likely effective for taurine transport in tissues where taurine is present at high concentrations. This Homo sapiens (Human) protein is Monocarboxylate transporter 7.